Reading from the N-terminus, the 103-residue chain is MTNFTTSTPHDALFKTFLTHPDTARDFMEIHLPKDLRELCDLDSLKLESASFVDEKLRALHSDILWSVKTREGDGYIYVVIEHQSREDIHMAFRLMRYSMAVM.

This sequence belongs to the Rpn/YhgA-like nuclease family.

This pseudogene is the N-terminal fragment of low activity DNA endonuclease RpnD which probably yields 3'-hydroxyl ends. The intact protein can be seen in this entry (AC B7NGZ6). Expression of the repaired protein increases the frequency of recA-independent recombination, but also decreases viability probably via DNA damage; in a RecA strain expression has no effect on viability but does induce the SOS repair response. May play a role in horizontal gene transfer. The sequence is that of Putative inactive recombination-promoting nuclease-like protein YjiP (yjiP) from Escherichia coli (strain K12).